The chain runs to 4870 residues: Malformin synthetase mlfA (4870 aa).

Residues 106–497 (ERRAANRPHS…CGRADTQVKL (392 aa)) form an adenylation 1 region. The 77-residue stretch at 635–711 (LGLSQLEQEI…EASSLAEVQE (77 aa)) folds into the Carrier 1 domain. Ser672 carries the post-translational modification O-(pantetheine 4'-phosphoryl)serine. The segment at 749-1133 (EDVFPCTTMQ…ALNTLTLLQA (385 aa)) is condensation 1. Residues 1161–1550 (DRWVTRQPES…GRKDTQVKLR (390 aa)) are adenylation 2. The Carrier 2 domain maps to 1688–1765 (TASSKLELTL…QLAAILGEAT (78 aa)). The residue at position 1725 (Ser1725) is an O-(pantetheine 4'-phosphoryl)serine. Disordered regions lie at residues 1764–1794 (ATGQPESSASSTTEEGFTFSTPDDSSTNDGV) and 1829–1859 (GSSSCKTPSVSSSSSSSSSRKKKSAKVVSPV). 2 stretches are compositionally biased toward low complexity: residues 1769 to 1792 (ESSASSTTEEGFTFSTPDDSSTND) and 1830 to 1846 (SSSCKTPSVSSSSSSSS). Positions 1898 to 2313 (EDIYPATALQ…GVSYRDKQTL (416 aa)) are condensation 2. The adenylation 3 stretch occupies residues 2336 to 2728 (VRTPHAPAVF…IGRRDGQLKL (393 aa)). Residues 2864-2940 (RPATAQEREM…QLMRHLSANG (77 aa)) enclose the Carrier 3 domain. Ser2901 is subject to O-(pantetheine 4'-phosphoryl)serine. 2 condensation regions span residues 2957-3422 (WVPL…TYDQ) and 3443-3862 (DIYP…EQLV). The interval 3887–4277 (HSSREAACAW…VGRKDNQIKF (391 aa)) is adenylation 4. Residues 4411–4487 (MPFTAAECKM…DLAYRTANLV (77 aa)) enclose the Carrier 4 domain. Ser4448 is subject to O-(pantetheine 4'-phosphoryl)serine. Positions 4524-4837 (EVLPTTSFQR…LQTIVQHQNN (314 aa)) are condensation 5.

The protein belongs to the NRP synthetase family.

It functions in the pathway secondary metabolite biosynthesis. Functionally, nonribosomal peptide synthetase; part of the gene cluster that mediates the biosynthesis of malformins, cyclic pentapeptides with a disulfide bond between 2 consecutive cysteins, that show potential anti-tumor as well as antimalarial and antitrypanosomal properties. The nonribosomal peptide synthetase mlfA is responsible of the formation of the cyclic pentapeptide. The malformin biosynthesis clusters in malformin-producing fungi also contain enzymes involved in the formation of the disulfide bond between the two consecutive cysteins within malformins, in addition to additional tailoring enzymes such as methyltransferases or oxidoreductases. They are also composed of up to 4 major facilitator superfamily transporters, and transcription factors probably involved in the regulation of the expression of those clusters. The polypeptide is Malformin synthetase mlfA (Aspergillus niger (strain ATCC 1015 / CBS 113.46 / FGSC A1144 / LSHB Ac4 / NCTC 3858a / NRRL 328 / USDA 3528.7)).